Consider the following 1356-residue polypeptide: Tenascin-R (1356 aa).

The signal sequence occupies residues 1–31 (MGIEGETVVLKNMLIGVNLILLGSMLKPSEC). N-linked (GlcNAc...) asparagine glycosylation is present at Asn-55. Positions 127–157 (CASSAQVLQELLSRIEMLEREVSVLRDQCNT) form a coiled coil. A glycan (O-linked (Xyl...) (chondroitin sulfate) serine) is linked at Ser-176. Asn-180 and Asn-198 each carry an N-linked (GlcNAc...) asparagine glycan. EGF-like domains are found at residues 188-199 (CICNEGWFGKNC), 204-230 (CPLGCSSRGVCVDGQCICDSEYSGDDC), and 235-261 (CPTDCSSRGLCVDGECVCEEPYTGEDC). Ser-271 carries an O-linked (Xyl...) (chondroitin sulfate) serine glycan. Asn-278 is a glycosylation site (N-linked (GlcNAc...) asparagine). EGF-like domains are found at residues 281 to 292 (CLCQEGYAGEDC) and 293 to 324 (SQRRCLNACSGRGHCQEGLCICEEGYQGPDCS). Intrachain disulfides connect Cys-297–Cys-307 and Cys-314–Cys-323. O-linked (Xyl...) (chondroitin sulfate) serine glycosylation is present at Ser-302. Fibronectin type-III domains are found at residues 328 to 419 (PPED…TPQG), 420 to 504 (LQFK…TVID), 505 to 596 (GPTQ…IDAP), 597 to 686 (KNLR…TELD), 687 to 776 (SPRD…FRPI), 777 to 864 (SHLH…TGID), 865 to 953 (PPKN…AMDS), 954 to 1040 (PMDL…TLLD), and 1041 to 1129 (PPAN…GGRV). Residues Asn-391, Asn-469, and Asn-580 are each glycosylated (N-linked (GlcNAc...) asparagine). Ser-723 carries the post-translational modification Phosphoserine. Asn-790, Asn-868, Asn-873, Asn-1034, Asn-1044, and Asn-1259 each carry an N-linked (GlcNAc...) asparagine glycan. The Fibrinogen C-terminal domain occupies 1127–1342 (GRVFSHPQDC…FVEMKMRPYI (216 aa)).

This sequence belongs to the tenascin family. In terms of assembly, forms oligomers. Interacts with TNC and FN1. Interacts with BCAN and ACAN in a calcium -dependent manner. Interacts with CNTN1, SCN2B, PTPRZ1, and CSPG3. Contains N-linked oligosaccharides, O-linked sialylated structures. Contains O-linked chondroitin sulfate glycosaminoglycans. Contains N-linked oligosaccharides with a sulfated carbohydrate structure type GalNAc-4-SO4 or HNK-1 (SO4-3-GlcUABeta1,3GalBeta1,4GlcNAc). The levels of HNK-1 rise and fall in parallel to those of TNR during postnatal development of the cerebellum. In contrast, levels of GalNAc-4-SO4 are regulated independently from those of TNR, rising late in cerebellar development and continuing into adulthood. Early in postnatal development, GalNAc-4-SO4 is found predominantly on isoform 1, whereas in the adult it is predominantly on isoform 2. In terms of tissue distribution, brain-specific. Expressed in oligodendrocytes and small subsets of neurons (mainly interneurons and motoneurons) of the cerebellum, hippocampus and olfactory bulb. Expressed in dorsal root ganglia.

It localises to the secreted. It is found in the extracellular space. The protein resides in the extracellular matrix. Functionally, neural extracellular matrix (ECM) protein involved in interactions with different cells and matrix components. Theses interactions can influence cellular behavior by either evoking a stable adhesion and differentiation, or repulsion and inhibition of neurite growth. Binding to cell surface gangliosides inhibits RGD-dependent integrin-mediated cell adhesion and results in an inhibition of PTK2/FAK1 (FAK) phosphorylation and cell detachment. Binding to membrane surface sulfatides results in a oligodendrocyte adhesion and differentiation. Interaction with CNTN1 induces a repulsion of neurons and an inhibition of neurite outgrowth. Interacts with SCN2B may play a crucial role in clustering and regulation of activity of sodium channels at nodes of Ranvier. TNR-linked chondroitin sulfate glycosaminoglycans are involved in the interaction with FN1 and mediates inhibition of cell adhesion and neurite outgrowth. The highly regulated addition of sulfated carbohydrate structure may modulate the adhesive properties of TNR over the course of development and during synapse maintenance. The polypeptide is Tenascin-R (Tnr) (Rattus norvegicus (Rat)).